The chain runs to 328 residues: Methionyl-tRNA formyltransferase (328 aa).

Position 110–113 (110–113) interacts with (6S)-5,6,7,8-tetrahydrofolate; sequence SLLP.

Belongs to the Fmt family.

It catalyses the reaction L-methionyl-tRNA(fMet) + (6R)-10-formyltetrahydrofolate = N-formyl-L-methionyl-tRNA(fMet) + (6S)-5,6,7,8-tetrahydrofolate + H(+). Functionally, attaches a formyl group to the free amino group of methionyl-tRNA(fMet). The formyl group appears to play a dual role in the initiator identity of N-formylmethionyl-tRNA by promoting its recognition by IF2 and preventing the misappropriation of this tRNA by the elongation apparatus. The sequence is that of Methionyl-tRNA formyltransferase from Prochlorococcus marinus (strain AS9601).